The following is a 470-amino-acid chain: Cysteine--tRNA ligase (470 aa).

Residue Cys31 participates in Zn(2+) binding. A 'HIGH' region motif is present at residues Pro33–His43. Zn(2+) contacts are provided by Cys209, His234, and Glu238. The short motif at Lys266–Ser270 is the 'KMSKS' region element. Position 269 (Lys269) interacts with ATP.

It belongs to the class-I aminoacyl-tRNA synthetase family. Zn(2+) serves as cofactor.

It localises to the cytoplasm. The enzyme catalyses tRNA(Cys) + L-cysteine + ATP = L-cysteinyl-tRNA(Cys) + AMP + diphosphate. This Saccharolobus solfataricus (strain ATCC 35092 / DSM 1617 / JCM 11322 / P2) (Sulfolobus solfataricus) protein is Cysteine--tRNA ligase.